Consider the following 397-residue polypeptide: Phosphoglycerate kinase (397 aa).

Residues 23 to 25 (DFN), arginine 38, 61 to 64 (HMGK), arginine 122, and arginine 155 contribute to the substrate site. ATP-binding positions include lysine 206, glycine 296, glutamate 327, and 353–356 (GGDS).

The protein belongs to the phosphoglycerate kinase family. In terms of assembly, monomer.

The protein resides in the cytoplasm. The catalysed reaction is (2R)-3-phosphoglycerate + ATP = (2R)-3-phospho-glyceroyl phosphate + ADP. Its pathway is carbohydrate degradation; glycolysis; pyruvate from D-glyceraldehyde 3-phosphate: step 2/5. The sequence is that of Phosphoglycerate kinase from Clostridium perfringens (strain ATCC 13124 / DSM 756 / JCM 1290 / NCIMB 6125 / NCTC 8237 / Type A).